The following is a 78-amino-acid chain: Toxin BmTxKS4 (78 aa).

A signal peptide spans 1–21 (MKLKISFLILVLFSVFFAIEG). Positions 22–32 (IIKWFPASVNG) are excised as a propeptide.

In terms of processing, contains 3 disulfide bonds. In terms of tissue distribution, expressed by the venom gland.

It localises to the secreted. Functionally, reversibly inhibits potassium channels. The protein is Toxin BmTxKS4 of Olivierus martensii (Manchurian scorpion).